The following is a 324-amino-acid chain: Olfactory receptor 11H4 (324 aa).

Residues 1–35 (MSFFFVDLRPMNRSATHIVTEFILLGFPGCWKIQI) are Extracellular-facing. A glycan (N-linked (GlcNAc...) asparagine) is linked at Asn12. Residues 36–56 (FLFSLFLVIYVLTLLGNGAII) form a helical membrane-spanning segment. At 57-64 (YAVRCNPL) the chain is on the cytoplasmic side. The chain crosses the membrane as a helical span at residues 65 to 85 (LHTPMYFLLGNFAFLEIWYVS). Residues 86–109 (STIPNMLVNILSKTKAISFSGCFL) lie on the Extracellular side of the membrane. Cys107 and Cys199 are disulfide-bonded. The chain crosses the membrane as a helical span at residues 110–130 (QFYFFFSLGTTECLFLAVMAY). At 131–149 (DRYLAICHPLQYPAIMTVR) the chain is on the cytoplasmic side. The helical transmembrane segment at 150–170 (FCGKLVSFCWLIGFLGYPIPI) threads the bilayer. The Extracellular segment spans residues 171-207 (FYISQLPFCGPNIIDHFLCDMDPLMALSCAPAPITEC). Residues 208–227 (IFYTQSSLVLFFTSMYILRS) traverse the membrane as a helical segment. Residues 228–247 (YILLLTAVFQVPSAAGRRKA) lie on the Cytoplasmic side of the membrane. Residues 248–268 (FSTCGSHLVVVSLFYGTVMVM) traverse the membrane as a helical segment. Residues 269 to 281 (YVSPTYGIPTLLQ) lie on the Extracellular side of the membrane. A helical transmembrane segment spans residues 282-302 (KILTLVYSVTTPLFNPLIYTL). Over 303 to 324 (RNKDMKLALRNVLFGMRIRQNS) the chain is Cytoplasmic.

It belongs to the G-protein coupled receptor 1 family.

The protein localises to the cell membrane. In terms of biological role, odorant receptor. This Homo sapiens (Human) protein is Olfactory receptor 11H4 (OR11H4).